The following is a 63-amino-acid chain: Large ribosomal subunit protein bL28 (63 aa).

It belongs to the bacterial ribosomal protein bL28 family.

The sequence is that of Large ribosomal subunit protein bL28 from Dictyoglomus thermophilum (strain ATCC 35947 / DSM 3960 / H-6-12).